The sequence spans 243 residues: MGGRDTDVVLLDENGIRCDGRKISETRRVEITAGVLNNANGSAYIEFGDNKILAGIFGPRDVHPKHMVRTETGILRCRYHMSPFSVSERKKPAPSRREIEISKVIKEALEPSLMLEQFPRTAVDVFIEVLQADGGSRCAALAAASVALADAGIPMRDMVSACAAGKVADTIVLDVNNEEDQAGQADMPVGYMPNLDQVTLIQLDGVLTPDEYSRCAAMAIDGCKQVYEVQKKALSDRFFGGGE.

The protein belongs to the RNase PH family. Rrp41 subfamily. Component of the archaeal exosome complex. Forms a hexameric ring-like arrangement composed of 3 Rrp41-Rrp42 heterodimers. The hexameric ring associates with a trimer of Rrp4 and/or Csl4 subunits.

It localises to the cytoplasm. Catalytic component of the exosome, which is a complex involved in RNA degradation. Has 3'-&gt;5' exoribonuclease activity. Can also synthesize heteromeric RNA-tails. The polypeptide is Exosome complex component Rrp41 (Cenarchaeum symbiosum (strain A)).